The chain runs to 203 residues: Pro-FMRFamide-related neuropeptide VF (203 aa).

The first 26 residues, 1-26 (MEIISSKRFILLTLATSSFLTSNTLC), serve as a signal peptide directing secretion. A propeptide spanning residues 27–57 (SDELMMPHFHSKEGYGKYYQLRGIPKGVKER) is cleaved from the precursor. Phenylalanine 94 carries the post-translational modification Phenylalanine amide. Positions 97-106 (NIEDRRSPRA) are excised as a propeptide. Position 125 is a phenylalanine amide (phenylalanine 125). A propeptide spanning residues 128 to 203 (TTARRITKTL…QPVLQGAMKL (76 aa)) is cleaved from the precursor. The interval 161 to 186 (HQEIQSPGQEQPRKRVFTETDDAERK) is disordered. A compositionally biased stretch (basic and acidic residues) spans 171-186 (QPRKRVFTETDDAERK).

The protein belongs to the FARP (FMRFamide related peptide) family. As to expression, isoform 1 is expressed at high levels in the hypothalamus and eye. Isoform 2 is specifically expressed in a region between the dorsomedial hypothalamic and ventromedial hypothalamic nuclei.

It localises to the secreted. Functionally, efficiently inhibits forskolin-induced production of cAMP. Acts as a potent negative regulator of gonadotropin synthesis and secretion. Induces secretion of prolactin. Its function is as follows. Efficiently inhibits forskolin-induced production of cAMP. Blocks morphine-induced analgesia. In Rattus norvegicus (Rat), this protein is Pro-FMRFamide-related neuropeptide VF (Npvf).